The following is a 405-amino-acid chain: Eukaryotic initiation factor 4A (405 aa).

Residues 31–59 carry the Q motif motif; sequence ECFEALNLEGDLLRGIFAYGFEKPSAIQQ. The Helicase ATP-binding domain maps to 62–232; that stretch reads IKPILDGYDT…TQFMRDPKRI (171 aa). Residue 75–82 coordinates ATP; the sequence is AQSGTGKT. The short motif at 180 to 183 is the DEAD box element; sequence DEAD. The region spanning 243-404 is the Helicase C-terminal domain; the sequence is GIRQFYVGVE…EMPMGITDIL (162 aa).

This sequence belongs to the DEAD box helicase family. eIF4A subfamily. EIF4F is a multi-subunit complex, the composition of which varies with external and internal environmental conditions. It is composed of at least EIF4A, EIF4E and EIF4G.

It carries out the reaction ATP + H2O = ADP + phosphate + H(+). In terms of biological role, ATP-dependent RNA helicase which is a subunit of the eIF4F complex involved in cap recognition and is required for mRNA binding to ribosome. In the current model of translation initiation, eIF4A unwinds RNA secondary structures in the 5'-UTR of mRNAs which is necessary to allow efficient binding of the small ribosomal subunit, and subsequent scanning for the initiator codon. The chain is Eukaryotic initiation factor 4A (EIF4-A) from Cryptosporidium parvum.